The primary structure comprises 473 residues: Protein TED1 (473 aa).

Residues 1-8 (MLRCAVKK) are Cytoplasmic-facing. A helical membrane pass occupies residues 9–29 (FAYFATFLTIVANIYIYTYPS). Residues 30–451 (FHPEQCSWNC…FSLCPFAIQH (422 aa)) are Lumenal-facing. Asparagine 38, asparagine 147, asparagine 229, asparagine 266, and asparagine 307 each carry an N-linked (GlcNAc...) asparagine glycan. Residues 452 to 472 (VWWFAKVSLLVTIFTWSSLLF) traverse the membrane as a helical segment. Position 473 (valine 473) is a topological domain, cytoplasmic.

N-glycosylated.

It localises to the endoplasmic reticulum membrane. In terms of biological role, acts together with EMP24 and ERV25 in cargo exit from the endoplasmic reticulum. The sequence is that of Protein TED1 (TED1) from Saccharomyces cerevisiae (strain ATCC 204508 / S288c) (Baker's yeast).